The sequence spans 1202 residues: DNA-directed RNA polymerase subunit beta (1202 aa).

It belongs to the RNA polymerase beta chain family. As to quaternary structure, the RNAP catalytic core consists of 2 alpha, 1 beta, 1 beta' and 1 omega subunit. When a sigma factor is associated with the core the holoenzyme is formed, which can initiate transcription.

It catalyses the reaction RNA(n) + a ribonucleoside 5'-triphosphate = RNA(n+1) + diphosphate. Its function is as follows. DNA-dependent RNA polymerase catalyzes the transcription of DNA into RNA using the four ribonucleoside triphosphates as substrates. This Mycoplasmopsis synoviae (strain 53) (Mycoplasma synoviae) protein is DNA-directed RNA polymerase subunit beta.